Consider the following 106-residue polypeptide: UPF0145 protein Tpet_0165 (106 aa).

It belongs to the UPF0145 family.

In Thermotoga petrophila (strain ATCC BAA-488 / DSM 13995 / JCM 10881 / RKU-1), this protein is UPF0145 protein Tpet_0165.